Consider the following 249-residue polypeptide: Type III pantothenate kinase (249 aa).

6–13 (DCGNSFIK) contacts ATP. Substrate is bound by residues Tyr-93 and 100-103 (GLDR). Catalysis depends on Asp-102, which acts as the Proton acceptor. Asp-122 serves as a coordination point for K(+). An ATP-binding site is contributed by Thr-125. Thr-181 is a substrate binding site.

Belongs to the type III pantothenate kinase family. In terms of assembly, homodimer. It depends on NH4(+) as a cofactor. The cofactor is K(+).

It is found in the cytoplasm. It catalyses the reaction (R)-pantothenate + ATP = (R)-4'-phosphopantothenate + ADP + H(+). It functions in the pathway cofactor biosynthesis; coenzyme A biosynthesis; CoA from (R)-pantothenate: step 1/5. Functionally, catalyzes the phosphorylation of pantothenate (Pan), the first step in CoA biosynthesis. The polypeptide is Type III pantothenate kinase (Pseudomonas fluorescens (strain Pf0-1)).